We begin with the raw amino-acid sequence, 519 residues long: Importin subunit alpha-9 (519 aa).

A disordered region spans residues 1–29 (MADDGSASNRRDPIKSSVGNVAGQRRRKQ). ARM repeat units lie at residues 116-156 (FPPV…NIAA), 158-197 (KPEE…NVAG), 200-239 (EDLR…NLIK), 244-283 (KAAA…YLSA), 286-326 (DIAT…NFVA), 335-374 (ILIR…NIAA), 377-416 (IEHK…NLCV), and 429-468 (QEHL…LVLR).

Belongs to the importin alpha family. In terms of assembly, forms a complex with importin subunit beta-1.

Its subcellular location is the nucleus envelope. In terms of biological role, binds to conventional NLS motifs and mediates nuclear protein import across the nuclear envelope. Acts as a cellular receptor for the nuclear import of the virD2 protein of Agrobacterium, but is not essential for Agrobacterium-mediated root transformation. The protein is Importin subunit alpha-9 of Arabidopsis thaliana (Mouse-ear cress).